A 50-amino-acid polypeptide reads, in one-letter code: Large ribosomal subunit protein bL33B (50 aa).

The protein belongs to the bacterial ribosomal protein bL33 family.

The chain is Large ribosomal subunit protein bL33B from Ligilactobacillus salivarius (strain UCC118) (Lactobacillus salivarius).